The sequence spans 645 residues: Sentrin-specific protease 1 (645 aa).

The interval 1 to 200 (MDDIADRMRM…REIYRQLLQM (200 aa)) is interaction with CCAR2. Residues Ser57, Ser117, and Ser157 each carry the phosphoserine modification. The disordered stretch occupies residues 92–117 (QSANGQWRNSTPSSSSSLQKSRNSRS). Positions 99-117 (RNSTPSSSSSLQKSRNSRS) are enriched in low complexity. The short motif at 171-177 (PKKTQRR) is the Nuclear localization signal element. Positions 285-313 (KDSGTLHHPHHHHSVPHQPDNLAASNTQS) are disordered. Protease regions lie at residues 451 to 614 (LTIT…YADC) and 451 to 615 (LTIT…ADCI). Residues His534 and Asp551 contribute to the active site. The Nuclear localization signal motif lies at 575–578 (KKRK). The active-site Nucleophile is the Cys604. Residues 629–635 (PYFRKRM) carry the Nuclear localization signal motif. The Nuclear export signal motif lies at 636 to 645 (VWEILHRKLL).

It belongs to the peptidase C48 family. As to quaternary structure, interacts with RBM33; promoting ALKBH5 desumoylation and subsequent activation.

The protein localises to the nucleus. It is found in the cytoplasm. Protease that catalyzes two essential functions in the SUMO pathway. The first is the hydrolysis of an alpha-linked peptide bond at the C-terminal end of the small ubiquitin-like modifier (SUMO) propeptides, SUMO1, SUMO2 and SUMO3 leading to the mature form of the proteins. The second is the deconjugation of SUMO1, SUMO2 and SUMO3 from targeted proteins, by cleaving an epsilon-linked peptide bond between the C-terminal glycine of the mature SUMO and the lysine epsilon-amino group of the target protein. Deconjugates SUMO1 from HIPK2. Deconjugates SUMO1 from HDAC1 and BHLHE40/DEC1, which decreases its transcriptional repression activity. Deconjugates SUMO1 from CLOCK, which decreases its transcriptional activation activity. Deconjugates SUMO2 from MTA1. Inhibits N(6)-methyladenosine (m6A) RNA methylation by mediating SUMO1 deconjugation from METTL3 and ALKBH5: METTL3 inhibits the m6A RNA methyltransferase activity, while ALKBH5 desumoylation promotes m6A demethylation. Desumoylates CCAR2 which decreases its interaction with SIRT1. Deconjugates SUMO1 from GPS2. This chain is Sentrin-specific protease 1 (SENP1), found in Pongo abelii (Sumatran orangutan).